A 357-amino-acid chain; its full sequence is Protein RecA (357 aa).

Residue 67–74 coordinates ATP; the sequence is GPESSGKT. The tract at residues 335-357 is disordered; it reads LASSASDDESTEGNIDLETGEIF.

It belongs to the RecA family.

Its subcellular location is the cytoplasm. In terms of biological role, can catalyze the hydrolysis of ATP in the presence of single-stranded DNA, the ATP-dependent uptake of single-stranded DNA by duplex DNA, and the ATP-dependent hybridization of homologous single-stranded DNAs. It interacts with LexA causing its activation and leading to its autocatalytic cleavage. The polypeptide is Protein RecA (Shewanella putrefaciens (strain CN-32 / ATCC BAA-453)).